Here is a 544-residue protein sequence, read N- to C-terminus: Probable protein kinase UbiB (544 aa).

A Protein kinase domain is found at 123–501 (DFDIKPLASA…KRQQAKGQFL (379 aa)). ATP is bound by residues 129–137 (LASASIAQV) and lysine 152. Aspartate 287 serves as the catalytic Proton acceptor. Residues 515–537 (LLTSNITVLASISAATGAAFWLF) traverse the membrane as a helical segment.

Belongs to the ABC1 family. UbiB subfamily.

The protein resides in the cell inner membrane. It functions in the pathway cofactor biosynthesis; ubiquinone biosynthesis [regulation]. Is probably a protein kinase regulator of UbiI activity which is involved in aerobic coenzyme Q (ubiquinone) biosynthesis. This is Probable protein kinase UbiB from Aliivibrio fischeri (strain MJ11) (Vibrio fischeri).